We begin with the raw amino-acid sequence, 145 residues long: D-aminoacyl-tRNA deacylase (145 aa).

A Gly-cisPro motif, important for rejection of L-amino acids motif is present at residues 137-138 (GP).

Belongs to the DTD family. Homodimer.

The protein localises to the cytoplasm. The enzyme catalyses glycyl-tRNA(Ala) + H2O = tRNA(Ala) + glycine + H(+). The catalysed reaction is a D-aminoacyl-tRNA + H2O = a tRNA + a D-alpha-amino acid + H(+). Its function is as follows. An aminoacyl-tRNA editing enzyme that deacylates mischarged D-aminoacyl-tRNAs. Also deacylates mischarged glycyl-tRNA(Ala), protecting cells against glycine mischarging by AlaRS. Acts via tRNA-based rather than protein-based catalysis; rejects L-amino acids rather than detecting D-amino acids in the active site. By recycling D-aminoacyl-tRNA to D-amino acids and free tRNA molecules, this enzyme counteracts the toxicity associated with the formation of D-aminoacyl-tRNA entities in vivo and helps enforce protein L-homochirality. The polypeptide is D-aminoacyl-tRNA deacylase (Pseudomonas fluorescens (strain Pf0-1)).